A 538-amino-acid polypeptide reads, in one-letter code: Small ribosomal subunit protein uS3m (538 aa).

Residues 111-134 (SSEGTEEERNEVRGRGAGKRVESI) form a disordered region. The segment covering 120–134 (NEVRGRGAGKRVESI) has biased composition (basic and acidic residues).

Belongs to the universal ribosomal protein uS3 family.

The protein resides in the mitochondrion. This Oryza sativa subsp. japonica (Rice) protein is Small ribosomal subunit protein uS3m (RPS3).